The primary structure comprises 498 residues: Glycerol kinase (498 aa).

T11 is an ADP binding site. ATP is bound by residues T11, S12, and S13. T11 contacts sn-glycerol 3-phosphate. R15 lines the ADP pocket. Sn-glycerol 3-phosphate contacts are provided by R81, E82, Y133, and D242. R81, E82, Y133, D242, and Q243 together coordinate glycerol. The ADP site is built by T264 and G307. T264, G307, Q311, and G412 together coordinate ATP. Positions 412 and 416 each coordinate ADP.

The protein belongs to the FGGY kinase family.

The enzyme catalyses glycerol + ATP = sn-glycerol 3-phosphate + ADP + H(+). It functions in the pathway polyol metabolism; glycerol degradation via glycerol kinase pathway; sn-glycerol 3-phosphate from glycerol: step 1/1. With respect to regulation, inhibited by fructose 1,6-bisphosphate (FBP). Its function is as follows. Key enzyme in the regulation of glycerol uptake and metabolism. Catalyzes the phosphorylation of glycerol to yield sn-glycerol 3-phosphate. This chain is Glycerol kinase, found in Acidovorax ebreus (strain TPSY) (Diaphorobacter sp. (strain TPSY)).